Reading from the N-terminus, the 261-residue chain is tRNA U34 carboxymethyltransferase (261 aa).

Carboxy-S-adenosyl-L-methionine contacts are provided by residues K25, W39, K44, G63, V114–E115, Y135, and R250.

Belongs to the class I-like SAM-binding methyltransferase superfamily. CmoB family. In terms of assembly, homotetramer.

It carries out the reaction carboxy-S-adenosyl-L-methionine + 5-hydroxyuridine(34) in tRNA = 5-carboxymethoxyuridine(34) in tRNA + S-adenosyl-L-homocysteine + H(+). In terms of biological role, catalyzes carboxymethyl transfer from carboxy-S-adenosyl-L-methionine (Cx-SAM) to 5-hydroxyuridine (ho5U) to form 5-carboxymethoxyuridine (cmo5U) at position 34 in tRNAs. This is tRNA U34 carboxymethyltransferase from Helicobacter pylori (strain G27).